A 210-amino-acid polypeptide reads, in one-letter code: Large ribosomal subunit protein uL3 (210 aa).

The disordered stretch occupies residues histidine 126–threonine 152.

Belongs to the universal ribosomal protein uL3 family. Part of the 50S ribosomal subunit. Forms a cluster with proteins L14 and L19.

In terms of biological role, one of the primary rRNA binding proteins, it binds directly near the 3'-end of the 23S rRNA, where it nucleates assembly of the 50S subunit. The protein is Large ribosomal subunit protein uL3 of Chloroflexus aurantiacus (strain ATCC 29366 / DSM 635 / J-10-fl).